A 414-amino-acid chain; its full sequence is Heterogeneous nuclear ribonucleoprotein F (414 aa).

At Met-1 the chain carries N-acetylmethionine. Met-2 carries the post-translational modification N-acetylmethionine; in Heterogeneous nuclear ribonucleoprotein F, N-terminally processed. One can recognise an RRM 1 domain in the interval 11–90 (FVVKLRGLPW…RYIEVFKSHR (80 aa)). Lys-72 is covalently cross-linked (Glycyl lysine isopeptide (Lys-Gly) (interchain with G-Cter in SUMO)). The interval 81–86 (RYIEVF) is interaction with RNA. Lys-87 is covalently cross-linked (Glycyl lysine isopeptide (Lys-Gly) (interchain with G-Cter in SUMO2)). 2 positions are modified to phosphoserine: Ser-104 and Ser-161. The RRM 2 domain maps to 111-188 (GFVRLRGLPF…RYIEVFKSSQ (78 aa)). Residue Lys-167 forms a Glycyl lysine isopeptide (Lys-Gly) (interchain with G-Cter in SUMO2) linkage. The interaction with RNA stretch occupies residues 179-184 (RYIEVF). A Glycyl lysine isopeptide (Lys-Gly) (interchain with G-Cter in SUMO2) cross-link involves residue Lys-185. Phosphoserine occurs at positions 187, 193, and 195. Lys-200 is modified (N6-acetyllysine; alternate). Residue Lys-200 forms a Glycyl lysine isopeptide (Lys-Gly) (interchain with G-Cter in SUMO2); alternate linkage. Position 215 is a phosphothreonine (Thr-215). An N6-acetyllysine; alternate modification is found at Lys-224. Lys-224 participates in a covalent cross-link: Glycyl lysine isopeptide (Lys-Gly) (interchain with G-Cter in SUMO2); alternate. A Phosphoserine modification is found at Ser-265. Positions 289-366 (HCVHMRGLPY…IELFLNSTTG (78 aa)) constitute an RRM 3 domain. Positions 355–360 (RYIELF) are interaction with RNA.

As to quaternary structure, identified in the spliceosome C complex. Interacts with AGO1, AGO2, TBP and TXNL4/DIM1. Sumoylated.

It localises to the nucleus. It is found in the nucleoplasm. Its function is as follows. Component of the heterogeneous nuclear ribonucleoprotein (hnRNP) complexes which provide the substrate for the processing events that pre-mRNAs undergo before becoming functional, translatable mRNAs in the cytoplasm. Plays a role in the regulation of alternative splicing events. Binds G-rich sequences in pre-mRNAs and keeps target RNA in an unfolded state. This is Heterogeneous nuclear ribonucleoprotein F (HNRNPF) from Bos taurus (Bovine).